The primary structure comprises 700 residues: Myb-related protein B (700 aa).

HTH myb-type domains are found at residues 26 to 77, 78 to 133, and 134 to 184; these read RDSK…LRVL, NPDL…NPEV, and KKSC…KRKV. A DNA-binding region (H-T-H motif) is located at residues 54-77; the sequence is WKFLASHFPNRTDQQCQYRWLRVL. Residue lysine 104 forms a Glycyl lysine isopeptide (Lys-Gly) (interchain with G-Cter in SUMO2) linkage. DNA-binding regions (H-T-H motif) lie at residues 106–129 and 157–180; these read WTLI…HNHL and WAEI…NSTI. Glycyl lysine isopeptide (Lys-Gly) (interchain with G-Cter in SUMO2) cross-links involve residues lysine 194 and lysine 197. Disordered stretches follow at residues 212 to 287 and 391 to 412; these read LQSA…PETS and PISP…VLKR. The span at 213 to 229 shows a compositional bias: polar residues; the sequence is QSAQPTEGQGSLLTNWP. Serine 241 carries the post-translational modification Phosphoserine. Threonine 266 carries the post-translational modification Phosphothreonine. Lysine 275 is covalently cross-linked (Glycyl lysine isopeptide (Lys-Gly) (interchain with G-Cter in SUMO2)). Residues serine 282 and serine 393 each carry the phosphoserine modification. A Glycyl lysine isopeptide (Lys-Gly) (interchain with G-Cter in SUMO2) cross-link involves residue lysine 411. A Nuclear localization signal motif is present at residues 411–417; that stretch reads KRQRKRR. Phosphothreonine; by CDK2 occurs at positions 440 and 444. Residues lysine 447 and lysine 482 each participate in a glycyl lysine isopeptide (Lys-Gly) (interchain with G-Cter in SUMO2) cross-link. 2 positions are modified to phosphothreonine; by CDK2: threonine 487 and threonine 494. Residue lysine 499 forms a Glycyl lysine isopeptide (Lys-Gly) (interchain with G-Cter in SUMO2) linkage. Threonine 505 is subject to Phosphothreonine. Residue lysine 509 forms a Glycyl lysine isopeptide (Lys-Gly) (interchain with G-Cter in SUMO2) linkage. A Phosphothreonine; by CDK2 modification is found at threonine 520. Glycyl lysine isopeptide (Lys-Gly) (interchain with G-Cter in SUMO2) cross-links involve residues lysine 523, lysine 533, and lysine 546. The short motif at 564-584 is the Bipartite nuclear localization signal element; that stretch reads RPEKQKRKPGLRRSPIKKVRK. Residue serine 577 is modified to Phosphoserine; by CDK2. Residues lysine 584, lysine 596, lysine 625, lysine 639, and lysine 648 each participate in a glycyl lysine isopeptide (Lys-Gly) (interchain with G-Cter in SUMO2) cross-link.

As to quaternary structure, component of the DREAM complex (also named LINC complex) at least composed of E2F4, E2F5, LIN9, LIN37, LIN52, LIN54, MYBL1, MYBL2, RBL1, RBL2, RBBP4, TFDP1 and TFDP2. The complex exists in quiescent cells where it represses cell cycle-dependent genes. It dissociates in S phase when LIN9, LIN37, LIN52 and LIN54 form a subcomplex that binds to MYBL22. Interacts with CCNF (via the Cyclin N-terminal domain). In terms of processing, phosphorylated by cyclin A/CDK2 during S-phase. Phosphorylation at Thr-520 is probably involved in transcriptional activity.

It localises to the nucleus. Transcription factor involved in the regulation of cell survival, proliferation, and differentiation. Transactivates the expression of the CLU gene. The polypeptide is Myb-related protein B (MYBL2) (Homo sapiens (Human)).